A 269-amino-acid chain; its full sequence is Signal recognition particle SEC65 subunit (269 aa).

Disordered stretches follow at residues R30–V65 and P236–G269. A compositionally biased stretch (low complexity) spans Q248 to K258. A compositionally biased stretch (basic residues) spans Q259–G269.

Belongs to the SRP19 family. Fungal signal recognition particle consists of a 7S RNA molecule (scR1) and at least six protein subunits: SRP72, SRP68, SRP54, SEC65, SRP21 andSRP14.

The protein localises to the cytoplasm. Functionally, signal-recognition-particle assembly has a crucial role in targeting secretory proteins to the rough endoplasmic reticulum membrane. It must be involved intimately in the translocation of a wide variety of protein substrates. This chain is Signal recognition particle SEC65 subunit (SEC65), found in Debaryomyces hansenii (strain ATCC 36239 / CBS 767 / BCRC 21394 / JCM 1990 / NBRC 0083 / IGC 2968) (Yeast).